We begin with the raw amino-acid sequence, 2059 residues long: DNA polymerase theta (2059 aa).

The tract at residues 25-45 is disordered; sequence DKENAQPGNGNIQVQSAGNEV. The span at 30–45 shows a compositional bias: polar residues; that stretch reads QPGNGNIQVQSAGNEV. In terms of domain architecture, Helicase ATP-binding spans 243 to 416; sequence PRLLFEHCNL…WLDAELYITN (174 aa). Residue 256 to 263 participates in ATP binding; sequence APTSAGKT. A DEAH box motif is present at residues 357–360; that stretch reads DEVH. The region spanning 464–666 is the Helicase C-terminal domain; sequence CIETLLEGCS…HLKRALLEVI (203 aa). 4 disordered regions span residues 1052-1073, 1168-1190, 1204-1274, and 1330-1372; these read PPVK…KNPR, PQLA…VNEG, QRTQ…SRKV, and PHAS…GVSS. Residues 1062–1071 show a composition bias toward polar residues; it reads ENGTANSQKN. Over residues 1213-1274 the composition is skewed to polar residues; that stretch reads KDQPIQASRS…NANRTASRKV (62 aa). Residues 1355 to 1365 show a composition bias toward basic and acidic residues; that stretch reads REIEIDLESKN.

Belongs to the DNA polymerase type-A family. Mg(2+) is required as a cofactor. In adult males, cleaved to produce a 100 kDa form. In terms of tissue distribution, expressed in ovaries (at protein level).

The protein resides in the nucleus. It catalyses the reaction DNA(n) + a 2'-deoxyribonucleoside 5'-triphosphate = DNA(n+1) + diphosphate. Its activity is regulated as follows. Resistant to aphidicolin, but sensitive to dideoxythymindine triphosphate (ddTTP) and N-ethyl malemide (NEM). Multifunctional protein with both DNA polymerase and ATPase activities. Might have 3' to 5' exonuclease activity. Plays a role in different DNA repair pathways such as DNA strand cross-link repair and microhomology-mediated end-joining (MMEJ), an alternative non-homologous end-joining (NHEJ) machinery triggered in response to double-strand breaks. MMEJ is an error-prone repair pathway that produces deletions of sequences from the strand being repaired and promotes genomic rearrangements, such as telomere fusions. Utilizes short microhomologies present in partially and fully single-stranded DNA (ssDNA) as primers for DNA synthesis. Prefers poly(dA)/oligo(dT) as a template-primer. The ATPase activity is necessary during interstrand cross-link (ICL) repair and has a critical role in generating templated insertions during MMEJ. Necessary for processing DNA damage induced by oxygen and N-ethylation. In follicle cells, contributes to double-strand break repair at physiological rereplication forks necessary for survival of fertilized eggs. The chain is DNA polymerase theta from Drosophila melanogaster (Fruit fly).